Reading from the N-terminus, the 414-residue chain is Transcriptional repressor protein YY1 (414 aa).

Residues 1–170 (MASGDTLYIA…SGGGASSGGG (170 aa)) form an interaction with the SMAD1/SMAD4 complex region. Residues 32-41 (PVETIETTVV) are compositionally biased toward low complexity. The disordered stretch occupies residues 32–83 (PVETIETTVVGEEEEEDDDDEDGGGGDHGGGGGGHGHAGHHHHHHHHHHHHP). Residues 42-55 (GEEEEEDDDDEDGG) show a composition bias toward acidic residues. Gly residues predominate over residues 57-67 (GDHGGGGGGHG). Residues 68-83 (HAGHHHHHHHHHHHHP) show a composition bias toward basic residues. A gly-rich region involved in interaction with HCFC1 region spans residues 118 to 260 (DDSDGLRAED…YSEYMTGKKL (143 aa)). Serine 120 carries the phosphoserine modification. Positions 159-203 (GKSGGGASSGGGRVKKGGGKKSGKKSYLGGGAGAAGGGGADPGNK) are disordered. Over residues 160-170 (KSGGGASSGGG) the composition is skewed to gly residues. Residues 171–182 (RVKKGGGKKSGK) show a composition bias toward basic residues. Residues lysine 182 and lysine 183 each participate in a glycyl lysine isopeptide (Lys-Gly) (interchain with G-Cter in SUMO2) cross-link. A compositionally biased stretch (gly residues) spans 186 to 199 (LGGGAGAAGGGGAD). Glycyl lysine isopeptide (Lys-Gly) (interchain with G-Cter in SUMO2) cross-links involve residues lysine 208 and lysine 230. Serine 247 carries the post-translational modification Phosphoserine. Residues 257-341 (GKKLPPGGIP…KAFVESSKLK (85 aa)) form an involved in nuclear matrix association region. Residues lysine 286 and lysine 288 each participate in a glycyl lysine isopeptide (Lys-Gly) (interchain with G-Cter in SUMO2) cross-link. Residues 295 to 414 (TIACPHKGCT…LTHAKAKNNQ (120 aa)) are binding to DNA. 3 C2H2-type zinc fingers span residues 296–320 (IACP…LHTH), 325–347 (HVCA…QLVH), and 353–377 (FQCT…VRIH). Residues cysteine 298, cysteine 303, histidine 316, histidine 320, cysteine 327, cysteine 330, histidine 343, histidine 347, cysteine 355, cysteine 360, histidine 373, and histidine 377 each contribute to the Zn(2+) site. Positions 333-371 (AFVESSKLKRHQLVHTGEKPFQCTFEGCGKRFSLDFNLR) are involved in repression of activated transcription. The tract at residues 371–397 (RTHVRIHTGDRPYVCPFDGCNKKFAQS) is involved in masking transactivation domain. Residue threonine 378 is modified to Phosphothreonine. A C2H2-type 4 zinc finger spans residues 383–407 (YVCPFDGCNKKFAQSTNLKSHILTH). Zn(2+) is bound by residues cysteine 385, cysteine 390, histidine 403, and histidine 407. Residues lysine 409 and lysine 411 each participate in a glycyl lysine isopeptide (Lys-Gly) (interchain with G-Cter in SUMO2) cross-link.

This sequence belongs to the YY transcription factor family. In terms of assembly, interacts with YAF2 through the region encompassing the first and second zinc fingers. Component of the chromatin remodeling INO80 complex; specifically part of a complex module associated with the DBINO domain of INO80. Interacts with EED and EZH2; the interactions are indicative for an association with the PRC2/EED-EZH2 complex. Found in a complex with SMAD1 and SMAD4. Interacts with SFMBT2. Found in a complex with YY1, SIN3A and HDAC1. Accessory component of the polycomb repressive deubiquitinase (PR-DUB) complex, at least composed of BAP1, one of ASXL1, ASXL2 or (probably) ASXL3 and one of MBD5 or MBD6; the PR-DUB core associates with a number of accessory proteins, including FOXK1, FOXK2, KDM1B, HCFC1, YY1 and OGT. Interacts (via Gly-rich region) with HCFC1; the interaction is direct. Interacts (via C-terminal zinc-finger domains) with BAP1 (via ULD domain); the interaction is direct and requires HCFC1. In terms of processing, transiently poly-ADP-ribosylated by PARP1 upon DNA damage, with the effect of decreasing affinity of YY1 to its cognate DNA binding sites. Post-translationally, ubiquitinated. Phosphorylation at Ser-120 by CK2 prevents proteolytic cleavage by caspase-7 (CASP7) during apoptosis. In terms of processing, proteolytically cleaved by caspase-7 (CASP7) in response to apoptosis. Phosphorylation at Ser-120 protects against proteolytic cleavage. In terms of tissue distribution, expressed in ovary and, at lower levels, in testis.

It is found in the nucleus. The protein localises to the nucleus matrix. It localises to the cytoplasm. Functionally, multifunctional transcription factor that exhibits positive and negative control on a large number of cellular and viral genes by binding to sites overlapping the transcription start site. Binds to the consensus sequence 5'-CCGCCATNTT-3'; some genes have been shown to contain a longer binding motif allowing enhanced binding; the initial CG dinucleotide can be methylated greatly reducing the binding affinity. The effect on transcription regulation is depending upon the context in which it binds and diverse mechanisms of action include direct activation or repression, indirect activation or repression via cofactor recruitment, or activation or repression by disruption of binding sites or conformational DNA changes. Its activity is regulated by transcription factors and cytoplasmic proteins that have been shown to abrogate or completely inhibit YY1-mediated activation or repression. Binds to the upstream conserved region (UCR) (5'-CGCCATTTT-3') of Moloney murine leukemia virus (MuLV). Acts synergistically with the SMAD1 and SMAD4 in bone morphogenetic protein (BMP)-mediated cardiac-specific gene expression. Binds to SMAD binding elements (SBEs) (5'-GTCT/AGAC-3') within BMP response element (BMPRE) of cardiac activating regions. Proposed to recruit the PRC2/EED-EZH2 complex to target genes that are transcriptional repressed. Involved in DNA repair. In vitro, binds to DNA recombination intermediate structures (Holliday junctions). Involved in spermatogenesis and may play a role in meiotic DNA double-strand break repair. Plays a role in regulating enhancer activation. Recruits the PR-DUB complex to specific gene-regulatory regions. Proposed core component of the chromatin remodeling INO80 complex which is involved in transcriptional regulation, DNA replication and probably DNA repair; proposed to target the INO80 complex to YY1-responsive elements. This Mus musculus (Mouse) protein is Transcriptional repressor protein YY1 (Yy1).